The sequence spans 349 residues: MEGPEVTDGDNVLNLTHLGLENLNLELVSENKRKDVQQLLLPHNRLVVLPPHVNSFTHLHLLDISNNNMAYIGEEILGLTKLKTLLAKNNRLDEFSFPKELGGLRLEVLNLSGNRFEEIPDQFLQIQTLKSLSLGGNRLKSIPAEIENLISLEFLYLGGNFISSIPPELANLPYLSYLVLCDNRIQSVPPQLAQVHSLRSLSLHNLLTYLPREILSLVQLQELSLRGNPLVVRFVRDLTYTPPTLLELAGRTVKSRGIPYCPQELPENLLMYLDLASKCPNPKCGGVYFDCCVRQIKFVDFCGKYRLPLMHYLCSPECSSPCGSTSQSESDSEDEANAAARRMQKVLLG.

10 LRR repeats span residues 14-34 (NLTH…NKRK), 35-56 (DVQQ…VNSF), 58-80 (HLHL…LGLT), 81-102 (KLKT…KELG), 105-125 (RLEV…QFLQ), 128-149 (TLKS…IENL), 151-173 (SLEF…ANLP), 174-195 (YLSY…LAQV), 197-217 (SLRS…ILSL), and 219-239 (QLQE…RDLT).

This Xenopus tropicalis (Western clawed frog) protein is Leucine-rich repeat-containing protein 58 (lrrc58).